Here is a 124-residue protein sequence, read N- to C-terminus: Flagellar transcriptional regulator FlhD (124 aa).

This sequence belongs to the FlhD family. Homodimer; disulfide-linked. Forms a heterohexamer composed of two FlhC and four FlhD subunits. Each FlhC binds a FlhD dimer, forming a heterotrimer, and a hexamer assembles by dimerization of two heterotrimers.

It localises to the cytoplasm. Its function is as follows. Functions in complex with FlhC as a master transcriptional regulator that regulates transcription of several flagellar and non-flagellar operons by binding to their promoter region. Activates expression of class 2 flagellar genes, including fliA, which is a flagellum-specific sigma factor that turns on the class 3 genes. Also regulates genes whose products function in a variety of physiological pathways. The sequence is that of Flagellar transcriptional regulator FlhD from Pectobacterium carotovorum (Erwinia carotovora).